Here is a 345-residue protein sequence, read N- to C-terminus: Protein RecA (345 aa).

An ATP-binding site is contributed by 65-72; the sequence is GPESSGKT.

The protein belongs to the RecA family.

Its subcellular location is the cytoplasm. Functionally, can catalyze the hydrolysis of ATP in the presence of single-stranded DNA, the ATP-dependent uptake of single-stranded DNA by duplex DNA, and the ATP-dependent hybridization of homologous single-stranded DNAs. It interacts with LexA causing its activation and leading to its autocatalytic cleavage. The protein is Protein RecA of Stenotrophomonas maltophilia (strain R551-3).